The sequence spans 59 residues: Small ribosomal subunit protein bS21 (59 aa).

Residues 36-59 (EHYEKPSVKRKKKAEAAKRNKSKF) form a disordered region. Positions 43–59 (VKRKKKAEAAKRNKSKF) are enriched in basic residues.

This sequence belongs to the bacterial ribosomal protein bS21 family.

This chain is Small ribosomal subunit protein bS21, found in Alkaliphilus oremlandii (strain OhILAs) (Clostridium oremlandii (strain OhILAs)).